We begin with the raw amino-acid sequence, 253 residues long: Sulfate transporter CysZ (253 aa).

The next 4 membrane-spanning stretches (helical) occupy residues F31–F51, L75–I95, I151–W171, and I222–V242.

It belongs to the CysZ family.

The protein localises to the cell inner membrane. In terms of biological role, high affinity, high specificity proton-dependent sulfate transporter, which mediates sulfate uptake. Provides the sulfur source for the cysteine synthesis pathway. The protein is Sulfate transporter CysZ of Shigella flexneri serotype 5b (strain 8401).